The chain runs to 282 residues: NADPH-dependent 7-cyano-7-deazaguanine reductase (282 aa).

Residue 88–90 (IES) participates in substrate binding. Position 90–91 (90–91 (SK)) interacts with NADPH. Cys-190 (thioimide intermediate) is an active-site residue. Asp-197 serves as the catalytic Proton donor. 229 to 230 (HE) contributes to the substrate binding site. 258–259 (RG) is a binding site for NADPH.

It belongs to the GTP cyclohydrolase I family. QueF type 2 subfamily. Homodimer.

It is found in the cytoplasm. It catalyses the reaction 7-aminomethyl-7-carbaguanine + 2 NADP(+) = 7-cyano-7-deazaguanine + 2 NADPH + 3 H(+). It participates in tRNA modification; tRNA-queuosine biosynthesis. Functionally, catalyzes the NADPH-dependent reduction of 7-cyano-7-deazaguanine (preQ0) to 7-aminomethyl-7-deazaguanine (preQ1). The sequence is that of NADPH-dependent 7-cyano-7-deazaguanine reductase from Citrobacter koseri (strain ATCC BAA-895 / CDC 4225-83 / SGSC4696).